A 197-amino-acid chain; its full sequence is Imidazoleglycerol-phosphate dehydratase (197 aa).

This sequence belongs to the imidazoleglycerol-phosphate dehydratase family.

It is found in the cytoplasm. It carries out the reaction D-erythro-1-(imidazol-4-yl)glycerol 3-phosphate = 3-(imidazol-4-yl)-2-oxopropyl phosphate + H2O. The protein operates within amino-acid biosynthesis; L-histidine biosynthesis; L-histidine from 5-phospho-alpha-D-ribose 1-diphosphate: step 6/9. This chain is Imidazoleglycerol-phosphate dehydratase, found in Clostridium acetobutylicum (strain ATCC 824 / DSM 792 / JCM 1419 / IAM 19013 / LMG 5710 / NBRC 13948 / NRRL B-527 / VKM B-1787 / 2291 / W).